The sequence spans 93 residues: Early E3A 10.5 kDa glycoprotein (93 aa).

N3 carries N-linked (GlcNAc...) asparagine; by host glycosylation. The helical transmembrane segment at M34–L55 threads the bilayer.

Belongs to the adenoviridae E3A-1 family. N-glycosylated and probably also O-glycosylated.

The protein localises to the host nucleus membrane. The chain is Early E3A 10.5 kDa glycoprotein from Homo sapiens (Human).